The sequence spans 320 residues: L-lactate dehydrogenase (320 aa).

NAD(+) is bound by residues V18, D39, R44, Y69, and 83-84; that span reads GA. Residues Q86 and R92 each contribute to the substrate site. NAD(+)-binding positions include T105, 122–124, and S147; that span reads AAN. 124–127 lines the substrate pocket; it reads NPVD. A substrate-binding site is contributed by 152 to 155; the sequence is DSAR. H179 functions as the Proton acceptor in the catalytic mechanism. Y223 carries the phosphotyrosine modification. Residue T232 participates in substrate binding.

The protein belongs to the LDH/MDH superfamily. LDH family. As to quaternary structure, homotetramer.

Its subcellular location is the cytoplasm. It carries out the reaction (S)-lactate + NAD(+) = pyruvate + NADH + H(+). Its pathway is fermentation; pyruvate fermentation to lactate; (S)-lactate from pyruvate: step 1/1. In terms of biological role, catalyzes the conversion of lactate to pyruvate. This is L-lactate dehydrogenase from Pediococcus pentosaceus (strain ATCC 25745 / CCUG 21536 / LMG 10740 / 183-1w).